Consider the following 888-residue polypeptide: Bifunctional uridylyltransferase/uridylyl-removing enzyme (888 aa).

Positions 1–338 (MIITSPLLDY…LPNYERKIEE (338 aa)) are uridylyltransferase. The interval 182-204 (EQAKRHAQHNNTESNLEPDIKNA) is disordered. A uridylyl-removing region spans residues 339 to 699 (INENFKLVDG…AHRQSAQDAV (361 aa)). The HD domain maps to 457 to 579 (VDAHTLLLIR…LGDMEHLDYL (123 aa)). ACT domains are found at residues 700-781 (QIFI…GLMQ) and 809-887 (MVEI…IVSQ).

The protein belongs to the GlnD family. It depends on Mg(2+) as a cofactor.

The catalysed reaction is [protein-PII]-L-tyrosine + UTP = [protein-PII]-uridylyl-L-tyrosine + diphosphate. It carries out the reaction [protein-PII]-uridylyl-L-tyrosine + H2O = [protein-PII]-L-tyrosine + UMP + H(+). Uridylyltransferase (UTase) activity is inhibited by glutamine, while glutamine activates uridylyl-removing (UR) activity. Functionally, modifies, by uridylylation and deuridylylation, the PII regulatory proteins (GlnB and homologs), in response to the nitrogen status of the cell that GlnD senses through the glutamine level. Under low glutamine levels, catalyzes the conversion of the PII proteins and UTP to PII-UMP and PPi, while under higher glutamine levels, GlnD hydrolyzes PII-UMP to PII and UMP (deuridylylation). Thus, controls uridylylation state and activity of the PII proteins, and plays an important role in the regulation of nitrogen assimilation and metabolism. The sequence is that of Bifunctional uridylyltransferase/uridylyl-removing enzyme from Acinetobacter baylyi (strain ATCC 33305 / BD413 / ADP1).